The following is a 149-amino-acid chain: Large ribosomal subunit protein bL9 (149 aa).

This sequence belongs to the bacterial ribosomal protein bL9 family.

Functionally, binds to the 23S rRNA. In Fusobacterium nucleatum subsp. nucleatum (strain ATCC 25586 / DSM 15643 / BCRC 10681 / CIP 101130 / JCM 8532 / KCTC 2640 / LMG 13131 / VPI 4355), this protein is Large ribosomal subunit protein bL9.